The primary structure comprises 640 residues: ETV5-related protein Ets96B (640 aa).

Positions 315–375 (HADSTTTAAQ…HHGHQQAEQQ (61 aa)) are disordered. Residues 321 to 356 (TAAQQQQQQQEQQQQQQQQQQQQQHQQQLQQAAALH) adopt a coiled-coil conformation. A compositionally biased stretch (low complexity) spans 322–355 (AAQQQQQQQEQQQQQQQQQQQQQHQQQLQQAAAL). The span at 356–369 (HPHHHHSHHGHHGH) shows a compositional bias: basic residues. The ETS DNA-binding region spans 498 to 579 (LQLWQFLVAL…NGERYVYRFV (82 aa)). The span at 609-624 (LAKTPPTSGDSQTQSP) shows a compositional bias: polar residues. Positions 609-628 (LAKTPPTSGDSQTQSPRVAK) are disordered.

It belongs to the ETS family. In the adult brain, expressed almost exclusively in dopaminergic neurons.

The protein localises to the nucleus. In terms of biological role, required in dopaminergic neurons to regulate expression of genes involved in dopamine signaling. Decreases expression of the dopamine transporter DAT and increases expression of the dopamine transporter Vmat and the tyrosine 3-monooxygenase ple which is involved in dopamine biosynthesis. Also involved in negatively regulating the expression of a group of endoplasmic reticulum proteins, the molecular chaperone Calr and the protein disulfide isomerases CaBP1 and ERp60. This Drosophila melanogaster (Fruit fly) protein is ETV5-related protein Ets96B.